Here is a 322-residue protein sequence, read N- to C-terminus: tRNA dimethylallyltransferase (322 aa).

21-28 (GQTAVGKT) contributes to the ATP binding site. Residue 23–28 (TAVGKT) participates in substrate binding. The interaction with substrate tRNA stretch occupies residues 46-49 (DSGC).

It belongs to the IPP transferase family. Monomer. Mg(2+) serves as cofactor.

It catalyses the reaction adenosine(37) in tRNA + dimethylallyl diphosphate = N(6)-dimethylallyladenosine(37) in tRNA + diphosphate. Catalyzes the transfer of a dimethylallyl group onto the adenine at position 37 in tRNAs that read codons beginning with uridine, leading to the formation of N6-(dimethylallyl)adenosine (i(6)A). This Wigglesworthia glossinidia brevipalpis protein is tRNA dimethylallyltransferase.